Here is a 963-residue protein sequence, read N- to C-terminus: Vacuolar membrane protease (963 aa).

The Cytoplasmic portion of the chain corresponds to 1 to 15 (MVSSRRGFNPIAFTP). Residues 16–36 (WPVTILTSLVYLALIIPIIVV) form a helical membrane-spanning segment. Over 37–391 (HHLVPPAPKQ…FQLNTLFGLS (355 aa)) the chain is Vacuolar. 2 N-linked (GlcNAc...) asparagine glycosylation sites follow: N111 and N114. Zn(2+) is bound by residues H170 and D182. E216 serves as the catalytic Proton acceptor. Zn(2+) is bound by residues E217, E242, and H315. The chain crosses the membrane as a helical span at residues 392-412 (VALLVVAPLLLILTSVALFAV). At 413-441 (DKMYMFSMYTYLSESGGQVSLYGLRGMFR) the chain is on the cytoplasmic side. A helical membrane pass occupies residues 442–462 (FPLILGISTALTVALAFLIMK). The Vacuolar portion of the chain corresponds to 463 to 473 (VNPFIIYSSPY). Residues 474–494 (AVWSMMLSTCMFFAWFISCVA) traverse the membrane as a helical segment. The Cytoplasmic segment spans residues 495–504 (DFARPSALHR). The chain crosses the membrane as a helical span at residues 505-525 (AYAFSWMFGILWVFLVIATVY). Topologically, residues 526–535 (QRQHGIASSY) are vacuolar. A helical membrane pass occupies residues 536 to 556 (FIVFYFAGVSVATWISYLELF). Topologically, residues 557–668 (GLSTTQDYAR…WSIYLVSSAW (112 aa)) are cytoplasmic. The tract at residues 569–618 (SRLSDRTPSSDSHLLAPSADELPSSGSVAGRDFNPEDVEDEEPTESTSLL) is disordered. Positions 603–612 (PEDVEDEEPT) are enriched in acidic residues. The chain crosses the membrane as a helical span at residues 669–689 (ILQFLLVAPIVLILLGQLGLF). Residues 690–705 (LTSATYQIGADGGSQF) are Vacuolar-facing. The chain crosses the membrane as a helical span at residues 706–726 (IIYIGIAVLSVLILLPLFPFI). Over 727–732 (HRFTYH) the chain is Cytoplasmic. A helical transmembrane segment spans residues 733–753 (IPTFMLFVLIGTLVYNLTAFP). Topologically, residues 754–963 (FSHNSRLKVA…LVEGSYSFKL (210 aa)) are vacuolar. Residue N835 is glycosylated (N-linked (GlcNAc...) asparagine).

It belongs to the peptidase M28 family. Zn(2+) is required as a cofactor.

It is found in the vacuole membrane. Functionally, may be involved in vacuolar sorting and osmoregulation. The polypeptide is Vacuolar membrane protease (Arthroderma gypseum (strain ATCC MYA-4604 / CBS 118893) (Microsporum gypseum)).